The sequence spans 208 residues: Outer-membrane lipoprotein carrier protein (208 aa).

The N-terminal stretch at 1–22 is a signal peptide; the sequence is MRKTLSILAISLPLLVSGYAQA.

Belongs to the LolA family. In terms of assembly, monomer.

It localises to the periplasm. Functionally, participates in the translocation of lipoproteins from the inner membrane to the outer membrane. Only forms a complex with a lipoprotein if the residue after the N-terminal Cys is not an aspartate (The Asp acts as a targeting signal to indicate that the lipoprotein should stay in the inner membrane). The polypeptide is Outer-membrane lipoprotein carrier protein (Shewanella sediminis (strain HAW-EB3)).